The primary structure comprises 428 residues: Serine--tRNA ligase (428 aa).

Residue 235-237 coordinates L-serine; sequence TAE. ATP is bound at residue 266-268; it reads RSE. An L-serine-binding site is contributed by Glu289. 353 to 356 is an ATP binding site; that stretch reads EISS. Ser389 serves as a coordination point for L-serine.

It belongs to the class-II aminoacyl-tRNA synthetase family. Type-1 seryl-tRNA synthetase subfamily. In terms of assembly, homodimer. The tRNA molecule binds across the dimer.

It is found in the cytoplasm. The catalysed reaction is tRNA(Ser) + L-serine + ATP = L-seryl-tRNA(Ser) + AMP + diphosphate + H(+). It carries out the reaction tRNA(Sec) + L-serine + ATP = L-seryl-tRNA(Sec) + AMP + diphosphate + H(+). It participates in aminoacyl-tRNA biosynthesis; selenocysteinyl-tRNA(Sec) biosynthesis; L-seryl-tRNA(Sec) from L-serine and tRNA(Sec): step 1/1. Functionally, catalyzes the attachment of serine to tRNA(Ser). Is also able to aminoacylate tRNA(Sec) with serine, to form the misacylated tRNA L-seryl-tRNA(Sec), which will be further converted into selenocysteinyl-tRNA(Sec). In Shewanella sp. (strain W3-18-1), this protein is Serine--tRNA ligase.